The following is a 334-amino-acid chain: Peroxidase 65 (334 aa).

Positions 1 to 28 (MSNMQFSRGFNPFVILFCLAVVAPIISA) are cleaved as a signal peptide. Cystine bridges form between Cys42–Cys123, Cys75–Cys80, Cys129–Cys326, and Cys208–Cys236. His73 serves as the catalytic Proton acceptor. Residues Asp74, Gly79, Asp81, and Ser83 each coordinate Ca(2+). Residue Pro171 coordinates substrate. Asn174 is a glycosylation site (N-linked (GlcNAc...) asparagine). His201 is a binding site for heme b. Thr202 contributes to the Ca(2+) binding site. Asn238 carries N-linked (GlcNAc...) asparagine glycosylation. Asp250, Thr253, and Asp258 together coordinate Ca(2+). Asn282 and Asn294 each carry an N-linked (GlcNAc...) asparagine glycan.

Belongs to the peroxidase family. Classical plant (class III) peroxidase subfamily. It depends on heme b as a cofactor. The cofactor is Ca(2+).

It localises to the secreted. The catalysed reaction is 2 a phenolic donor + H2O2 = 2 a phenolic radical donor + 2 H2O. In terms of biological role, removal of H(2)O(2), oxidation of toxic reductants, biosynthesis and degradation of lignin, suberization, auxin catabolism, response to environmental stresses such as wounding, pathogen attack and oxidative stress. These functions might be dependent on each isozyme/isoform in each plant tissue. In Arabidopsis thaliana (Mouse-ear cress), this protein is Peroxidase 65 (PER65).